The chain runs to 860 residues: SH2 domain-containing protein 3C (860 aa).

S22 carries the post-translational modification Phosphoserine. Disordered stretches follow at residues 51–117 (EATQ…PPGL) and 130–180 (PLED…PEAG). A compositionally biased stretch (basic and acidic residues) spans 162 to 175 (ERPPRDVHSERAAG). Residues 220 to 319 (WYHGRIPREV…QSGAIIYCPV (100 aa)) enclose the SH2 domain. Y278 and Y283 each carry phosphotyrosine. A disordered region spans residues 335 to 537 (GQGSSKPASP…LSENGAPEGD (203 aa)). S359 is subject to Phosphoserine. Low complexity-rich tracts occupy residues 405 to 420 (SPMS…PAYS), 427 to 443 (AAPA…SPVA), and 479 to 490 (SPSPSLSSYSDP). Residue S440 is modified to Phosphoserine. Positions 586–854 (DARTLARHVT…TALSHKLEPA (269 aa)) constitute a Ras-GEF domain. Y793 carries the phosphotyrosine modification.

In terms of assembly, component of a complex comprised of SH2D3C, BCAR1/CAS, and CRK. Within the complex, interacts with CRK and (via C-terminus) with BCAR1/CAS (via C-terminus). Interacts with NEDD9/HEF1. Interacts with EPHB2. As to quaternary structure, interacts with NEDD9/HEF1. Interacts with BCAR1/CAS. Interacts with PTK2B. Interacts (via C-terminus) with BCAR1/CAS (via C-terminus). Interacts with IGF1. In terms of processing, phosphorylated by MAPK/ERK upon T-cell receptor stimulation in T-cells. In terms of tissue distribution, ubiquitously expressed.

Its subcellular location is the cytoplasm. The protein resides in the cell membrane. It localises to the cell projection. The protein localises to the axon. It is found in the ruffle membrane. Its function is as follows. Acts as an adapter protein that mediates cell signaling pathways involved in cellular functions such as cell adhesion and migration, tissue organization, and the regulation of the immune response. Plays a role in integrin-mediated cell adhesion through BCAR1-CRK-RAPGEF1 signaling and activation of the small GTPase RAP1. Promotes cell migration and invasion through the extracellular matrix. Required for marginal zone B-cell development and thymus-independent type 2 immune responses. Mediates migration and adhesion of B cells in the splenic marginal zone via promoting hyperphosphorylation of NEDD9/CASL. Plays a role in CXCL13-induced chemotaxis of B-cells. Plays a role in the migration of olfactory sensory neurons (OSNs) into the forebrain and the innervation of the olfactory bulb by the OSN axons during development. Required for the efficient tyrosine phosphorylation of BCAR1 in OSN axons. Important regulator of chemokine-induced, integrin-mediated T lymphocyte adhesion and migration, acting upstream of RAP1. Required for tissue-specific adhesion of T lymphocytes to peripheral tissues. Required for basal and CXCL2 stimulated serine-threonine phosphorylation of NEDD9. May be involved in the regulation of T-cell receptor-mediated IL2 production through the activation of the JNK pathway in T-cells. In terms of biological role, may be involved in the BCAR1/CAS-mediated JNK activation pathway. The chain is SH2 domain-containing protein 3C (SH2D3C) from Homo sapiens (Human).